Consider the following 157-residue polypeptide: UPF0225 protein PMI1492 (157 aa).

Belongs to the UPF0225 family.

This chain is UPF0225 protein PMI1492, found in Proteus mirabilis (strain HI4320).